Consider the following 70-residue polypeptide: Large ribosomal subunit protein bL32 (70 aa).

Positions 1–19 (MAVPKRKTTPSRRGMRRSH) are enriched in basic residues. The disordered stretch occupies residues 1–21 (MAVPKRKTTPSRRGMRRSHQA).

The protein belongs to the bacterial ribosomal protein bL32 family.

This is Large ribosomal subunit protein bL32 from Gluconobacter oxydans (strain 621H) (Gluconobacter suboxydans).